A 284-amino-acid chain; its full sequence is Protoheme IX farnesyltransferase (284 aa).

Helical transmembrane passes span 13–33, 35–55, 87–107, 108–128, 133–153, 162–182, 224–244, and 264–284; these read IIIG…FPFF, VFLF…SCIF, IFAS…VNIL, SMFL…FFLK, YSTF…HTAI, FLLF…IAIL, FLGY…FYWL, and FYYS…DFIF.

The protein belongs to the UbiA prenyltransferase family. Protoheme IX farnesyltransferase subfamily.

It is found in the cell membrane. The catalysed reaction is heme b + (2E,6E)-farnesyl diphosphate + H2O = Fe(II)-heme o + diphosphate. The protein operates within porphyrin-containing compound metabolism; heme O biosynthesis; heme O from protoheme: step 1/1. Its function is as follows. Converts heme B (protoheme IX) to heme O by substitution of the vinyl group on carbon 2 of heme B porphyrin ring with a hydroxyethyl farnesyl side group. The chain is Protoheme IX farnesyltransferase from Buchnera aphidicola subsp. Schizaphis graminum (strain Sg).